A 335-amino-acid chain; its full sequence is NADH-quinone oxidoreductase subunit H (335 aa).

A run of 8 helical transmembrane segments spans residues 11–31, 81–101, 114–134, 154–174, 187–207, 238–258, 270–290, and 307–327; these read VILT…CGAL, VIFT…FVVI, IGLL…LFAG, VSYE…VGSF, LWFI…GVAV, FFVG…TLFF, QLSF…FILL, and WKFC…IVLY.

The protein belongs to the complex I subunit 1 family. As to quaternary structure, NDH-1 is composed of 13 different subunits. Subunits NuoA, H, J, K, L, M, N constitute the membrane sector of the complex.

Its subcellular location is the cell inner membrane. It catalyses the reaction a quinone + NADH + 5 H(+)(in) = a quinol + NAD(+) + 4 H(+)(out). In terms of biological role, NDH-1 shuttles electrons from NADH, via FMN and iron-sulfur (Fe-S) centers, to quinones in the respiratory chain. The immediate electron acceptor for the enzyme in this species is believed to be ubiquinone. Couples the redox reaction to proton translocation (for every two electrons transferred, four hydrogen ions are translocated across the cytoplasmic membrane), and thus conserves the redox energy in a proton gradient. This subunit may bind ubiquinone. This Pseudomonas putida (strain ATCC 700007 / DSM 6899 / JCM 31910 / BCRC 17059 / LMG 24140 / F1) protein is NADH-quinone oxidoreductase subunit H.